The following is a 378-amino-acid chain: Ribosomal RNA large subunit methyltransferase G (378 aa).

Belongs to the methyltransferase superfamily. RlmG family.

The protein resides in the cytoplasm. It carries out the reaction guanosine(1835) in 23S rRNA + S-adenosyl-L-methionine = N(2)-methylguanosine(1835) in 23S rRNA + S-adenosyl-L-homocysteine + H(+). Specifically methylates the guanine in position 1835 (m2G1835) of 23S rRNA. This is Ribosomal RNA large subunit methyltransferase G from Shewanella baltica (strain OS155 / ATCC BAA-1091).